We begin with the raw amino-acid sequence, 408 residues long: Arginine biosynthesis bifunctional protein ArgJ (408 aa).

The substrate site is built by Thr-156, Lys-182, Thr-193, Glu-279, Asn-403, and Thr-408. Catalysis depends on Thr-193, which acts as the Nucleophile.

Belongs to the ArgJ family. Heterotetramer of two alpha and two beta chains.

Its subcellular location is the cytoplasm. The catalysed reaction is N(2)-acetyl-L-ornithine + L-glutamate = N-acetyl-L-glutamate + L-ornithine. The enzyme catalyses L-glutamate + acetyl-CoA = N-acetyl-L-glutamate + CoA + H(+). Its pathway is amino-acid biosynthesis; L-arginine biosynthesis; L-ornithine and N-acetyl-L-glutamate from L-glutamate and N(2)-acetyl-L-ornithine (cyclic): step 1/1. It functions in the pathway amino-acid biosynthesis; L-arginine biosynthesis; N(2)-acetyl-L-ornithine from L-glutamate: step 1/4. Its function is as follows. Catalyzes two activities which are involved in the cyclic version of arginine biosynthesis: the synthesis of N-acetylglutamate from glutamate and acetyl-CoA as the acetyl donor, and of ornithine by transacetylation between N(2)-acetylornithine and glutamate. In Methylococcus capsulatus (strain ATCC 33009 / NCIMB 11132 / Bath), this protein is Arginine biosynthesis bifunctional protein ArgJ.